The following is a 407-amino-acid chain: Protein-glutamine gamma-glutamyltransferase (407 aa).

The N-terminal stretch at 1 to 31 (MRIRRRALVFATMSAVLCTAGFMPSAGEAAA) is a signal peptide. Residues 32–76 (DNGAGEETKSYAETYRLTADDVANINALNESAPAASSAGPSFRAP) constitute a propeptide that is removed on maturation. Over residues 62-72 (SAPAASSAGPS) the composition is skewed to low complexity. Residues 62-98 (SAPAASSAGPSFRAPDSDDRVTPPAEPLDRMPDPYRP) are disordered. The segment covering 76–94 (PDSDDRVTPPAEPLDRMPD) has biased composition (basic and acidic residues). Residue Cys-140 is part of the active site. The tract at residues 282-322 (QDRSSSADKRKYGDPDAFRPAPGTGLVDMSRDRNIPRSPTS) is disordered. Over residues 286 to 298 (SSADKRKYGDPDA) the composition is skewed to basic and acidic residues. Active-site residues include Asp-331 and His-350.

It belongs to the bacterial TGase family.

The enzyme catalyses L-glutaminyl-[protein] + L-lysyl-[protein] = [protein]-L-lysyl-N(6)-5-L-glutamyl-[protein] + NH4(+). Catalyzes the cross-linking of proteins and the conjugation of polyamines to proteins. The protein is Protein-glutamine gamma-glutamyltransferase of Streptomyces mobaraensis (Streptoverticillium mobaraense).